We begin with the raw amino-acid sequence, 183 residues long: Neuronal synaptobrevin (183 aa).

The segment covering 1–17 (MADAAPAGDAPPNAGAP) has biased composition (low complexity). A disordered region spans residues 1 to 32 (MADAAPAGDAPPNAGAPAGEGGDGEIVGGPHN). The Cytoplasmic portion of the chain corresponds to 1–106 (MADAAPAGDA…KFWLQNLKMM (106 aa)). A compositionally biased stretch (gly residues) spans 18 to 27 (AGEGGDGEIV). One can recognise a v-SNARE coiled-coil homology domain in the interval 41-101 (RLQQTQAQVD…GKLKRKFWLQ (61 aa)). The helical transmembrane segment at 107–127 (IIMGVIGLVVVGIIANKLGLI) threads the bilayer. The Vesicular portion of the chain corresponds to 128–183 (GGEQPPQYQYPPQYMQPPPPPPQQPAGGQSSLVDAAGAGDGAGAGGSAGAGDHGGV). The segment at 135 to 183 (YQYPPQYMQPPPPPPQQPAGGQSSLVDAAGAGDGAGAGGSAGAGDHGGV) is disordered. A compositionally biased stretch (pro residues) spans 141-151 (YMQPPPPPPQQ). Residues 165–183 (AGDGAGAGGSAGAGDHGGV) are compositionally biased toward gly residues.

Belongs to the synaptobrevin family. In terms of assembly, part of the SNARE core complex containing Snap25 and syntaxin. As to expression, specifically expressed in neurons and synapses.

Its subcellular location is the cytoplasmic vesicle. The protein resides in the secretory vesicle. It localises to the synaptic vesicle membrane. It is found in the early endosome membrane. Its function is as follows. Involved in the targeting and/or fusion of transport vesicles to their target membrane. Major SNARE protein of synaptic vesicles which mediates fusion of synaptic vesicles to release neurotransmitters. Essential for fast vesicular exocytosis and activity-dependent neurotransmitter release as well as fast endocytosis that mediates rapid reuse of synaptic vesicles. Also involved in a neuron-specific sort-and-degrade mechanism that promotes endolysosomal degradation and is required for neuronal maintenance. The polypeptide is Neuronal synaptobrevin (Drosophila melanogaster (Fruit fly)).